The primary structure comprises 481 residues: Endoplasmic reticulum lectin 1 (481 aa).

Residues 1 to 27 (MRRSDRLRCAGASLLVVLCGVFRSSFG) form the signal peptide. MRH domains are found at residues 108-245 (SSCS…LCNH) and 340-467 (SYCF…ICKI). 6 disulfide bridges follow: cysteine 110–cysteine 123, cysteine 198–cysteine 231, cysteine 214–cysteine 243, cysteine 342–cysteine 355, cysteine 419–cysteine 453, and cysteine 434–cysteine 465.

The protein resides in the endoplasmic reticulum lumen. Functionally, probable lectin that binds selectively to improperly folded lumenal proteins. May function in endoplasmic reticulum quality control and endoplasmic reticulum-associated degradation (ERAD) of both non-glycosylated proteins and glycoproteins. The sequence is that of Endoplasmic reticulum lectin 1 (erlec1) from Xenopus tropicalis (Western clawed frog).